Reading from the N-terminus, the 384-residue chain is Erythronate-4-phosphate dehydrogenase (384 aa).

Substrate contacts are provided by Ser45 and Thr66. NAD(+) is bound by residues Asp147 and Thr177. Arg210 is an active-site residue. Residue Asp234 participates in NAD(+) binding. Glu239 is an active-site residue. His256 serves as the catalytic Proton donor. Gly259 serves as a coordination point for NAD(+). Tyr260 is a substrate binding site.

This sequence belongs to the D-isomer specific 2-hydroxyacid dehydrogenase family. PdxB subfamily. In terms of assembly, homodimer.

The protein resides in the cytoplasm. It catalyses the reaction 4-phospho-D-erythronate + NAD(+) = (R)-3-hydroxy-2-oxo-4-phosphooxybutanoate + NADH + H(+). It functions in the pathway cofactor biosynthesis; pyridoxine 5'-phosphate biosynthesis; pyridoxine 5'-phosphate from D-erythrose 4-phosphate: step 2/5. In terms of biological role, catalyzes the oxidation of erythronate-4-phosphate to 3-hydroxy-2-oxo-4-phosphonooxybutanoate. The chain is Erythronate-4-phosphate dehydrogenase from Marinobacter nauticus (strain ATCC 700491 / DSM 11845 / VT8) (Marinobacter aquaeolei).